The sequence spans 177 residues: Shikimate kinase (177 aa).

Position 17-22 (17-22 (GAGKST)) interacts with ATP. Mg(2+) is bound at residue S21. Residues D39, R63, and G85 each coordinate substrate. Residue R123 coordinates ATP. Residue R142 participates in substrate binding. R160 contacts ATP.

The protein belongs to the shikimate kinase family. In terms of assembly, monomer. Mg(2+) is required as a cofactor.

It localises to the cytoplasm. It catalyses the reaction shikimate + ATP = 3-phosphoshikimate + ADP + H(+). It functions in the pathway metabolic intermediate biosynthesis; chorismate biosynthesis; chorismate from D-erythrose 4-phosphate and phosphoenolpyruvate: step 5/7. Its function is as follows. Catalyzes the specific phosphorylation of the 3-hydroxyl group of shikimic acid using ATP as a cosubstrate. This chain is Shikimate kinase, found in Halorhodospira halophila (strain DSM 244 / SL1) (Ectothiorhodospira halophila (strain DSM 244 / SL1)).